We begin with the raw amino-acid sequence, 194 residues long: Holliday junction branch migration complex subunit RuvA (194 aa).

Positions 1-64 are domain I; it reads MIGRLRGVLT…DDSAALYGFL (64 aa). Positions 65–140 are domain II; that stretch reads SESERRLFRH…RAADFNNGIS (76 aa). Residues 140 to 144 form a flexible linker region; sequence STSGK. The segment at 145–194 is domain III; the sequence is LNLDTVSEAALALQQLGYKPAEAARMARDAGTESDDVASVIKKALQAALR.

This sequence belongs to the RuvA family. As to quaternary structure, homotetramer. Forms an RuvA(8)-RuvB(12)-Holliday junction (HJ) complex. HJ DNA is sandwiched between 2 RuvA tetramers; dsDNA enters through RuvA and exits via RuvB. An RuvB hexamer assembles on each DNA strand where it exits the tetramer. Each RuvB hexamer is contacted by two RuvA subunits (via domain III) on 2 adjacent RuvB subunits; this complex drives branch migration. In the full resolvosome a probable DNA-RuvA(4)-RuvB(12)-RuvC(2) complex forms which resolves the HJ.

It is found in the cytoplasm. The RuvA-RuvB-RuvC complex processes Holliday junction (HJ) DNA during genetic recombination and DNA repair, while the RuvA-RuvB complex plays an important role in the rescue of blocked DNA replication forks via replication fork reversal (RFR). RuvA specifically binds to HJ cruciform DNA, conferring on it an open structure. The RuvB hexamer acts as an ATP-dependent pump, pulling dsDNA into and through the RuvAB complex. HJ branch migration allows RuvC to scan DNA until it finds its consensus sequence, where it cleaves and resolves the cruciform DNA. This chain is Holliday junction branch migration complex subunit RuvA, found in Xylella fastidiosa (strain 9a5c).